A 345-amino-acid polypeptide reads, in one-letter code: L-threonine 3-dehydrogenase (345 aa).

Position 42 (Cys42) interacts with Zn(2+). Catalysis depends on charge relay system residues Thr44 and His47. Zn(2+) is bound by residues His67, Glu68, Cys97, Cys100, Cys103, and Cys111. Residues Ile179, Asp199, Arg204, 266–268 (LGI), and 290–291 (IY) each bind NAD(+).

The protein belongs to the zinc-containing alcohol dehydrogenase family. Homotetramer. Requires Zn(2+) as cofactor.

It is found in the cytoplasm. The catalysed reaction is L-threonine + NAD(+) = (2S)-2-amino-3-oxobutanoate + NADH + H(+). It functions in the pathway amino-acid degradation; L-threonine degradation via oxydo-reductase pathway; glycine from L-threonine: step 1/2. Catalyzes the NAD(+)-dependent oxidation of L-threonine to 2-amino-3-ketobutyrate. This is L-threonine 3-dehydrogenase from Rhizobium johnstonii (strain DSM 114642 / LMG 32736 / 3841) (Rhizobium leguminosarum bv. viciae).